We begin with the raw amino-acid sequence, 428 residues long: Adenylosuccinate synthetase (428 aa).

GTP-binding positions include 12-18 (GDEGKGK) and 40-42 (GHT). The active-site Proton acceptor is Asp13. Mg(2+) is bound by residues Asp13 and Gly40. IMP is bound by residues 13–16 (DEGK), 38–41 (NAGH), Thr129, Arg143, Gln224, Thr239, and Arg303. Catalysis depends on His41, which acts as the Proton donor. 299 to 305 (VTTGRIR) is a substrate binding site. GTP is bound by residues Arg305, 331–333 (KVD), and 410–412 (AYG).

This sequence belongs to the adenylosuccinate synthetase family. In terms of assembly, homodimer. The cofactor is Mg(2+).

The protein resides in the cytoplasm. The catalysed reaction is IMP + L-aspartate + GTP = N(6)-(1,2-dicarboxyethyl)-AMP + GDP + phosphate + 2 H(+). Its pathway is purine metabolism; AMP biosynthesis via de novo pathway; AMP from IMP: step 1/2. In terms of biological role, plays an important role in the de novo pathway of purine nucleotide biosynthesis. Catalyzes the first committed step in the biosynthesis of AMP from IMP. The sequence is that of Adenylosuccinate synthetase from Francisella tularensis subsp. tularensis (strain FSC 198).